Consider the following 420-residue polypeptide: Putative competence-damage inducible protein (420 aa).

Belongs to the CinA family.

This is Putative competence-damage inducible protein from Lactiplantibacillus plantarum (strain ATCC BAA-793 / NCIMB 8826 / WCFS1) (Lactobacillus plantarum).